Reading from the N-terminus, the 272-residue chain is 4-hydroxy-tetrahydrodipicolinate reductase (272 aa).

Residues Gly-10–Met-15, Glu-36, Gly-100–Thr-102, and Ser-124–Met-127 each bind NAD(+). The active-site Proton donor/acceptor is His-157. Residue His-158 coordinates (S)-2,3,4,5-tetrahydrodipicolinate. The active-site Proton donor is the Lys-161. Gly-167–Thr-168 contributes to the (S)-2,3,4,5-tetrahydrodipicolinate binding site.

It belongs to the DapB family.

The protein resides in the cytoplasm. It catalyses the reaction (S)-2,3,4,5-tetrahydrodipicolinate + NAD(+) + H2O = (2S,4S)-4-hydroxy-2,3,4,5-tetrahydrodipicolinate + NADH + H(+). The catalysed reaction is (S)-2,3,4,5-tetrahydrodipicolinate + NADP(+) + H2O = (2S,4S)-4-hydroxy-2,3,4,5-tetrahydrodipicolinate + NADPH + H(+). It participates in amino-acid biosynthesis; L-lysine biosynthesis via DAP pathway; (S)-tetrahydrodipicolinate from L-aspartate: step 4/4. Functionally, catalyzes the conversion of 4-hydroxy-tetrahydrodipicolinate (HTPA) to tetrahydrodipicolinate. This Afipia carboxidovorans (strain ATCC 49405 / DSM 1227 / KCTC 32145 / OM5) (Oligotropha carboxidovorans) protein is 4-hydroxy-tetrahydrodipicolinate reductase.